The following is a 119-amino-acid chain: Centrocin 1 (119 aa).

The signal sequence occupies residues 1–20 (MMIKIAVVLCAVMATTMVRA). Positions 21–50 (KYVEEQELADLLDLLISEEVSSPDDAVALQ) are excised as a propeptide. 6'-bromotryptophan occurs at positions 52 and 53. A disulfide bridge connects residues Cys75 and Cys110. Positions 81–104 (SPQEARAKVLEAFPEMKEADLDEE) are excised as a propeptide. Asn117 is subject to Asparagine amide.

As to quaternary structure, heterodimer of a light and a heavy chain, probably disulfide-linked.

In terms of biological role, has antimicrobial activity against Gram-negative bacteria, Gram-positive bacteria and against fungi with minimum inhibitory concentration (MIC) between 0.78 uM and 50 uM. Shows little hemolytic activity even at a concentration of 100 uM. Its function is as follows. Has no antimicrobial activity. Shows no hemolytic activity. The sequence is that of Centrocin 1 from Echinus esculentus (Sea urchin).